We begin with the raw amino-acid sequence, 132 residues long: Large ribosomal subunit protein bL12 (132 aa).

The protein belongs to the bacterial ribosomal protein bL12 family. In terms of assembly, homodimer. Part of the ribosomal stalk of the 50S ribosomal subunit. Forms a multimeric L10(L12)X complex, where L10 forms an elongated spine to which 2 to 4 L12 dimers bind in a sequential fashion. Binds GTP-bound translation factors.

Functionally, forms part of the ribosomal stalk which helps the ribosome interact with GTP-bound translation factors. Is thus essential for accurate translation. This Chloroflexus aggregans (strain MD-66 / DSM 9485) protein is Large ribosomal subunit protein bL12.